We begin with the raw amino-acid sequence, 331 residues long: MKNIYPNELKKSLMQKLHYFYIFLGEDFFLLEKNQDMILNFAYKKGFLEKIIIDVEKNQDWKKIILFYKTNNLFFKKTTLVINFLIKKLNVILIQNLNKMFSLLHPDILIILKFNHLSRFIQKNKSLKEFKNYNIVSCFTPYNLNFINWIKYEIQEKKINIEEKAFFLLCKYYEGNTLFIYKILDMLFIIWPDTCITEKKIKKIIIEFFDVSPSYWINSIFQGKTEKSFYILNIFFKKKYNPLILVRSLQKDLLQLIHMKREKKISIYVMLEKYNIFVTRRKFFIKAFNKINNDSLLKAIQILVKIEVNIKKKYNNYVWNQLQELILILCN.

This sequence belongs to the DNA polymerase HolA subunit family. DNA polymerase III contains a core (composed of alpha, epsilon and theta chains) that associates with a tau subunit. This core dimerizes to form the POLIII' complex. PolIII' associates with the gamma complex (composed of gamma, delta, delta', psi and chi chains) and with the beta chain to form the complete DNA polymerase III complex.

It catalyses the reaction DNA(n) + a 2'-deoxyribonucleoside 5'-triphosphate = DNA(n+1) + diphosphate. In terms of biological role, DNA polymerase III is a complex, multichain enzyme responsible for most of the replicative synthesis in bacteria. This DNA polymerase also exhibits 3' to 5' exonuclease activity. The delta subunit seems to interact with the gamma subunit to transfer the beta subunit on the DNA. This Buchnera aphidicola subsp. Acyrthosiphon pisum (strain APS) (Acyrthosiphon pisum symbiotic bacterium) protein is DNA polymerase III subunit delta (holA).